We begin with the raw amino-acid sequence, 125 residues long: Anticoagulant salivary protein 14 (125 aa).

The first 21 residues, 1–21, serve as a signal peptide directing secretion; it reads MGLTGTMLVLVSLAFFGSAAA. N26, N81, and N87 each carry an N-linked (GlcNAc...) asparagine glycan. The span at 75–86 shows a compositional bias: polar residues; it reads GECHLTNNSGGP. The disordered stretch occupies residues 75-125; it reads GECHLTNNSGGPNETDDYTPAPTEKPKQKKKKTKKTKKPKRKSKKDQEKNL. Positions 91–125 are responsible for anticoagulant activity; it reads DYTPAPTEKPKQKKKKTKKTKKPKRKSKKDQEKNL. A compositionally biased stretch (basic residues) spans 101 to 118; that stretch reads KQKKKKTKKTKKPKRKSK.

Belongs to the salp14 family. As to expression, salivary gland (at protein level). Saliva (at protein level).

It is found in the secreted. Its function is as follows. Salivary anticoagulant protein that facilitates blood feeding of adult ticks on vertebrate species. Inhibits host coagulation factor Xa (F10). Blocks the assembly and/or early activity of the prothrombinase complex (Xa-Va/F10-F5). Inhibits the lectin pathway of complement system activation in the host. The sequence is that of Anticoagulant salivary protein 14 from Ixodes scapularis (Black-legged tick).